The following is a 101-amino-acid chain: Protein Tat (101 aa).

The interaction with human CREBBP stretch occupies residues 1 to 24; the sequence is MEPVDPNLEPWKHPGSQPRTACTN. Residues 1 to 48 form a transactivation region; sequence MEPVDPNLEPWKHPGSQPRTACTNCYCKKCCFHCQVCFITKGLGISYG. Zn(2+)-binding residues include cysteine 22, cysteine 25, and cysteine 27. Residues 22 to 37 form a cysteine-rich region; that stretch reads CTNCYCKKCCFHCQVC. Lysine 28 carries the N6-acetyllysine; by host PCAF modification. 4 residues coordinate Zn(2+): cysteine 30, histidine 33, cysteine 34, and cysteine 37. Residues 38-48 form a core region; sequence FITKGLGISYG. Positions 48–101 are disordered; that stretch reads GRKKRRQRQRAPDSSQNHQDSLSKQPSSQPRGDPTGPKESKKEVERETETDPLD. The Nuclear localization signal, RNA-binding (TAR), and protein transduction signature appears at 49-57; that stretch reads RKKRRQRQR. The interval 49 to 86 is interaction with the host capping enzyme RNGTT; it reads RKKRRQRQRAPDSSQNHQDSLSKQPSSQPRGDPTGPKE. Residues lysine 50 and lysine 51 each carry the N6-acetyllysine; by host EP300 and GCN5L2 modification. An asymmetric dimethylarginine; by host PRMT6 mark is found at arginine 52 and arginine 53. A compositionally biased stretch (polar residues) spans 59 to 77; it reads PDSSQNHQDSLSKQPSSQP. Residue lysine 71 forms a Glycyl lysine isopeptide (Lys-Gly) (interchain with G-Cter in ubiquitin) linkage. The short motif at 78-80 is the Cell attachment site element; it reads RGD. Residues 83-101 show a composition bias toward basic and acidic residues; the sequence is GPKESKKEVERETETDPLD.

The protein belongs to the lentiviruses Tat family. As to quaternary structure, interacts with host CCNT1. Associates with the P-TEFb complex composed at least of Tat, P-TEFb (CDK9 and CCNT1), TAR RNA, RNA Pol II. Recruits the HATs CREBBP, TAF1/TFIID, EP300, PCAF and GCN5L2. Interacts with host KAT5/Tip60; this interaction targets the latter to degradation. Interacts with the host deacetylase SIRT1. Interacts with host capping enzyme RNGTT; this interaction stimulates RNGTT. Binds to host KDR, and to the host integrins ITGAV/ITGB3 and ITGA5/ITGB1. Interacts with host KPNB1/importin beta-1 without previous binding to KPNA1/importin alpha-1. Interacts with EIF2AK2. Interacts with host nucleosome assembly protein NAP1L1; this interaction may be required for the transport of Tat within the nucleus, since the two proteins interact at the nuclear rim. Interacts with host C1QBP/SF2P32; this interaction involves lysine-acetylated Tat. Interacts with the host chemokine receptors CCR2, CCR3 and CXCR4. Interacts with host DPP4/CD26; this interaction may trigger an anti-proliferative effect. Interacts with host LDLR. Interacts with the host extracellular matrix metalloproteinase MMP1. Interacts with host PRMT6; this interaction mediates Tat's methylation. Interacts with, and is ubiquitinated by MDM2/Hdm2. Interacts with host PSMC3 and HTATIP2. Interacts with STAB1; this interaction may overcome SATB1-mediated repression of IL2 and IL2RA (interleukin) in T cells by binding to the same domain than HDAC1. Interacts (when acetylated) with human CDK13, thereby increasing HIV-1 mRNA splicing and promoting the production of the doubly spliced HIV-1 protein Nef. Interacts with host TBP; this interaction modulates the activity of transcriptional pre-initiation complex. Interacts with host RELA. Interacts with host PLSCR1; this interaction negatively regulates Tat transactivation activity by altering its subcellular distribution. In terms of processing, asymmetrical arginine methylation by host PRMT6 seems to diminish the transactivation capacity of Tat and affects the interaction with host CCNT1. Post-translationally, acetylation by EP300, CREBBP, GCN5L2/GCN5 and PCAF regulates the transactivation activity of Tat. EP300-mediated acetylation of Lys-50 promotes dissociation of Tat from the TAR RNA through the competitive binding to PCAF's bromodomain. In addition, the non-acetylated Tat's N-terminus can also interact with PCAF. PCAF-mediated acetylation of Lys-28 enhances Tat's binding to CCNT1. Lys-50 is deacetylated by SIRT1. Polyubiquitination by host MDM2 does not target Tat to degradation, but activates its transactivation function and fosters interaction with CCNT1 and TAR RNA. In terms of processing, phosphorylated by EIF2AK2 on serine and threonine residues adjacent to the basic region important for TAR RNA binding and function. Phosphorylation of Tat by EIF2AK2 is dependent on the prior activation of EIF2AK2 by dsRNA.

Its subcellular location is the host nucleus. The protein localises to the host nucleolus. It localises to the host cytoplasm. The protein resides in the secreted. Its function is as follows. Transcriptional activator that increases RNA Pol II processivity, thereby increasing the level of full-length viral transcripts. Recognizes a hairpin structure at the 5'-LTR of the nascent viral mRNAs referred to as the transactivation responsive RNA element (TAR) and recruits the cyclin T1-CDK9 complex (P-TEFb complex) that will in turn hyperphosphorylate the RNA polymerase II to allow efficient elongation. The CDK9 component of P-TEFb and other Tat-activated kinases hyperphosphorylate the C-terminus of RNA Pol II that becomes stabilized and much more processive. Other factors such as HTATSF1/Tat-SF1, SUPT5H/SPT5, and HTATIP2 are also important for Tat's function. Besides its effect on RNA Pol II processivity, Tat induces chromatin remodeling of proviral genes by recruiting the histone acetyltransferases (HATs) CREBBP, EP300 and PCAF to the chromatin. This also contributes to the increase in proviral transcription rate, especially when the provirus integrates in transcriptionally silent region of the host genome. To ensure maximal activation of the LTR, Tat mediates nuclear translocation of NF-kappa-B by interacting with host RELA. Through its interaction with host TBP, Tat may also modulate transcription initiation. Tat can reactivate a latently infected cell by penetrating in it and transactivating its LTR promoter. In the cytoplasm, Tat is thought to act as a translational activator of HIV-1 mRNAs. In terms of biological role, extracellular circulating Tat can be endocytosed by surrounding uninfected cells via the binding to several surface receptors such as CD26, CXCR4, heparan sulfate proteoglycans (HSPG) or LDLR. Neurons are rarely infected, but they internalize Tat via their LDLR. Through its interaction with nuclear HATs, Tat is potentially able to control the acetylation-dependent cellular gene expression. Modulates the expression of many cellular genes involved in cell survival, proliferation or in coding for cytokines or cytokine receptors. Tat plays a role in T-cell and neurons apoptosis. Tat induced neurotoxicity and apoptosis probably contribute to neuroAIDS. Circulating Tat also acts as a chemokine-like and/or growth factor-like molecule that binds to specific receptors on the surface of the cells, affecting many cellular pathways. In the vascular system, Tat binds to ITGAV/ITGB3 and ITGA5/ITGB1 integrins dimers at the surface of endothelial cells and competes with bFGF for heparin-binding sites, leading to an excess of soluble bFGF. The polypeptide is Protein Tat (Human immunodeficiency virus type 1 group M subtype B (isolate SF33) (HIV-1)).